The chain runs to 84 residues: UPF0457 protein BCE33L2961 (84 aa).

Belongs to the UPF0457 family.

This Bacillus cereus (strain ZK / E33L) protein is UPF0457 protein BCE33L2961.